Consider the following 223-residue polypeptide: Phosphoribosylformylglycinamidine synthase subunit PurQ (223 aa).

The region spanning 2–223 is the Glutamine amidotransferase type-1 domain; that stretch reads KFAVIQFPGS…ASVLKNFVGK (222 aa). C86 serves as the catalytic Nucleophile. Active-site residues include H195 and E197.

Part of the FGAM synthase complex composed of 1 PurL, 1 PurQ and 2 PurS subunits.

It is found in the cytoplasm. The catalysed reaction is N(2)-formyl-N(1)-(5-phospho-beta-D-ribosyl)glycinamide + L-glutamine + ATP + H2O = 2-formamido-N(1)-(5-O-phospho-beta-D-ribosyl)acetamidine + L-glutamate + ADP + phosphate + H(+). The enzyme catalyses L-glutamine + H2O = L-glutamate + NH4(+). It functions in the pathway purine metabolism; IMP biosynthesis via de novo pathway; 5-amino-1-(5-phospho-D-ribosyl)imidazole from N(2)-formyl-N(1)-(5-phospho-D-ribosyl)glycinamide: step 1/2. In terms of biological role, part of the phosphoribosylformylglycinamidine synthase complex involved in the purines biosynthetic pathway. Catalyzes the ATP-dependent conversion of formylglycinamide ribonucleotide (FGAR) and glutamine to yield formylglycinamidine ribonucleotide (FGAM) and glutamate. The FGAM synthase complex is composed of three subunits. PurQ produces an ammonia molecule by converting glutamine to glutamate. PurL transfers the ammonia molecule to FGAR to form FGAM in an ATP-dependent manner. PurS interacts with PurQ and PurL and is thought to assist in the transfer of the ammonia molecule from PurQ to PurL. The protein is Phosphoribosylformylglycinamidine synthase subunit PurQ of Lactococcus lactis subsp. lactis (strain IL1403) (Streptococcus lactis).